A 301-amino-acid polypeptide reads, in one-letter code: Putative S-adenosyl-L-methionine-dependent methyltransferase MMAR_4850 (301 aa).

S-adenosyl-L-methionine is bound by residues Asp127 and 156–157 (DL).

This sequence belongs to the UPF0677 family.

Exhibits S-adenosyl-L-methionine-dependent methyltransferase activity. This chain is Putative S-adenosyl-L-methionine-dependent methyltransferase MMAR_4850, found in Mycobacterium marinum (strain ATCC BAA-535 / M).